Reading from the N-terminus, the 105-residue chain is Putative regulatory protein COPRO5265_1186 (105 aa).

Residues 76–105 are disordered; that stretch reads RLEEEEEEEERTEPITEQEAELEEESGEDV. Residues 78 to 105 show a composition bias toward acidic residues; it reads EEEEEEEERTEPITEQEAELEEESGEDV.

Belongs to the RemA family.

In Coprothermobacter proteolyticus (strain ATCC 35245 / DSM 5265 / OCM 4 / BT), this protein is Putative regulatory protein COPRO5265_1186.